Here is a 122-residue protein sequence, read N- to C-terminus: Small ribosomal subunit protein uS13 (122 aa).

The segment at 95-122 (GLPVRGQRTHTNARTRKGPAKSIAGKKK) is disordered.

This sequence belongs to the universal ribosomal protein uS13 family. As to quaternary structure, part of the 30S ribosomal subunit. Forms a loose heterodimer with protein S19. Forms two bridges to the 50S subunit in the 70S ribosome.

Its function is as follows. Located at the top of the head of the 30S subunit, it contacts several helices of the 16S rRNA. In the 70S ribosome it contacts the 23S rRNA (bridge B1a) and protein L5 of the 50S subunit (bridge B1b), connecting the 2 subunits; these bridges are implicated in subunit movement. Contacts the tRNAs in the A and P-sites. The polypeptide is Small ribosomal subunit protein uS13 (Nitrobacter winogradskyi (strain ATCC 25391 / DSM 10237 / CIP 104748 / NCIMB 11846 / Nb-255)).